A 388-amino-acid polypeptide reads, in one-letter code: Na(+)/H(+) antiporter NhaA (388 aa).

Topologically, residues 1–11 (MKHLHRFFSSD) are cytoplasmic. Residues 12-31 (ASGGIILIIAAVLAMIMANS) traverse the membrane as a helical segment. Residues 32–58 (GATSGWYHDFLETPVQLRVGTLEINKN) lie on the Periplasmic side of the membrane. A helical membrane pass occupies residues 59-80 (MLLWINDALMAVFFLLVGLEVK). The Cytoplasmic segment spans residues 81 to 96 (RELMQGSLASLRQAAF). The chain crosses the membrane as a helical span at residues 97–116 (PVIAAIGGMIVPALLYLAFN). Residues 117–122 (YADPIT) are Periplasmic-facing. A helical membrane pass occupies residues 123–130 (REGWAIPA). Residues 131–154 (ATDIAFALGVLALLGSRVPLALKI) are Cytoplasmic-facing. The helical transmembrane segment at 155-176 (FLMALAIIDDLGAIIIIALFYT) threads the bilayer. The Periplasmic portion of the chain corresponds to 177–180 (NDLS). A helical membrane pass occupies residues 181-200 (MASLGVAAVAIAVLVVLNLC). Topologically, residues 201 to 204 (GVRR) are cytoplasmic. The chain crosses the membrane as a helical span at residues 205 to 222 (TGVYILVGVVLWTAVLKS). A topological domain (periplasmic) is located at residue G223. Residues 224 to 236 (VHATLAGVIVGFF) form a helical membrane-spanning segment. Over 237 to 253 (IPLKEKHGRSPAKRLEH) the chain is Cytoplasmic. Residues 254–272 (VLHPWVAYLILPLFAFANA) traverse the membrane as a helical segment. Residues 273–286 (GVSLQGVTLEGLTS) lie on the Periplasmic side of the membrane. The helical transmembrane segment at 287-310 (ILPLGIIAGLLIGKPLGISLFCWL) threads the bilayer. At 311–339 (ALRLKLAHLPEGTTYQQIMAVGILCGIGF) the chain is on the cytoplasmic side. Residues 340-350 (TMSIFIASLAF) form a helical membrane-spanning segment. The Periplasmic segment spans residues 351 to 357 (GSVDPEL). Residues 358 to 380 (INWAKLGILVGSISSAVIGYSWL) traverse the membrane as a helical segment. Residues 381–388 (RVRLRPSV) are Cytoplasmic-facing.

This sequence belongs to the NhaA Na(+)/H(+) (TC 2.A.33) antiporter family.

It is found in the cell inner membrane. It catalyses the reaction Na(+)(in) + 2 H(+)(out) = Na(+)(out) + 2 H(+)(in). In terms of biological role, na(+)/H(+) antiporter that extrudes sodium in exchange for external protons. The protein is Na(+)/H(+) antiporter NhaA of Escherichia coli O1:K1 / APEC.